The chain runs to 374 residues: Beta sliding clamp (374 aa).

Belongs to the beta sliding clamp family. As to quaternary structure, forms a ring-shaped head-to-tail homodimer around DNA which binds and tethers DNA polymerases and other proteins to the DNA. The DNA replisome complex has a single clamp-loading complex (3 tau and 1 each of delta, delta', psi and chi subunits) which binds 3 Pol III cores (1 core on the leading strand and 2 on the lagging strand) each with a beta sliding clamp dimer. Additional proteins in the replisome are other copies of gamma, psi and chi, Ssb, DNA helicase and RNA primase.

Its subcellular location is the cytoplasm. Its function is as follows. Confers DNA tethering and processivity to DNA polymerases and other proteins. Acts as a clamp, forming a ring around DNA (a reaction catalyzed by the clamp-loading complex) which diffuses in an ATP-independent manner freely and bidirectionally along dsDNA. Initially characterized for its ability to contact the catalytic subunit of DNA polymerase III (Pol III), a complex, multichain enzyme responsible for most of the replicative synthesis in bacteria; Pol III exhibits 3'-5' exonuclease proofreading activity. The beta chain is required for initiation of replication as well as for processivity of DNA replication. The protein is Beta sliding clamp (dnaN) of Helicobacter pylori (strain ATCC 700392 / 26695) (Campylobacter pylori).